We begin with the raw amino-acid sequence, 495 residues long: Sugar phosphate exchanger 3 (495 aa).

A helical membrane pass occupies residues 16–36; that stretch reads FSHHHMVVFLLTFFSYSLLHA. Residue Asn58 is glycosylated (N-linked (GlcNAc...) asparagine). Transmembrane regions (helical) follow at residues 82 to 102, 114 to 134, 148 to 168, 178 to 198, and 210 to 230; these read TLFLGMLDTIFLFSYAVGLFI, WVLSFGMCSSALVVFVFGTLT, LWIVNGLLQSTGWPCVVAVMG, VVFGLWSACASVGNILGACLA, and FLVTAAVQFAGGIIIFFGLLV. N-linked (GlcNAc...) asparagine glycosylation occurs at Asn267. The next 6 helical transmembrane spans lie at 298–318, 334–354, 358–378, 387–407, 429–449, and 453–473; these read LAYACLKLVNYSFFFWLPFYL, IWYDVGGIIGGTLQGFISDML, APVLALSLLLAIGSLVGYSRS, LLMAVTGFFIGGPSNMISSAI, GIVDGTGSIGAAVGQYLVSLI, and LGWMWVFYFFILMTSCTVLFI.

Belongs to the major facilitator superfamily. Organophosphate:Pi antiporter (OPA) (TC 2.A.1.4) family. As to quaternary structure, interacts with ATRAID; the interaction is direct and both proteins are mutually dependent for their stability. Post-translationally, glycosylated.

It is found in the endoplasmic reticulum membrane. It localises to the lysosome membrane. In terms of biological role, unlike the other SLC37 members, lacks glucose-6-phosphate antiporter activity. In osteoclasts, forms a transporter complex with ATRAID for nitrogen-containing-bisphophonates (N-BPs) required for releasing N-BP molecules that have trafficked to lysosomes through fluid-phase endocytosis into the cytosol. This chain is Sugar phosphate exchanger 3 (SLC37A3), found in Bos taurus (Bovine).